The sequence spans 347 residues: Probable dual-specificity RNA methyltransferase RlmN (347 aa).

Glu94 (proton acceptor) is an active-site residue. Residues 100–319 (YPSRTIACIS…LDTLVKNGID (220 aa)) enclose the Radical SAM core domain. A disulfide bond links Cys107 and Cys334. Residues Cys114, Cys118, and Cys121 each coordinate [4Fe-4S] cluster. S-adenosyl-L-methionine is bound by residues 161–162 (GE), Ser193, 216–218 (SLH), and Asn292. The S-methylcysteine intermediate role is filled by Cys334.

Belongs to the radical SAM superfamily. RlmN family. [4Fe-4S] cluster is required as a cofactor.

The protein localises to the cytoplasm. It catalyses the reaction adenosine(2503) in 23S rRNA + 2 reduced [2Fe-2S]-[ferredoxin] + 2 S-adenosyl-L-methionine = 2-methyladenosine(2503) in 23S rRNA + 5'-deoxyadenosine + L-methionine + 2 oxidized [2Fe-2S]-[ferredoxin] + S-adenosyl-L-homocysteine. The enzyme catalyses adenosine(37) in tRNA + 2 reduced [2Fe-2S]-[ferredoxin] + 2 S-adenosyl-L-methionine = 2-methyladenosine(37) in tRNA + 5'-deoxyadenosine + L-methionine + 2 oxidized [2Fe-2S]-[ferredoxin] + S-adenosyl-L-homocysteine. In terms of biological role, specifically methylates position 2 of adenine 2503 in 23S rRNA and position 2 of adenine 37 in tRNAs. The chain is Probable dual-specificity RNA methyltransferase RlmN from Petrotoga mobilis (strain DSM 10674 / SJ95).